A 158-amino-acid chain; its full sequence is Osmosensory protein A (158 aa).

Threonine 2 is modified (phosphothreonine; by PknD). Positions 28–139 (AQIRAYLHHL…RSVHKALHDL (112 aa)) constitute an STAS domain.

This sequence belongs to the anti-sigma-factor antagonist family. Interacts with Rv2638. Phosphorylation abolishes binding to Rv2638. In terms of processing, phosphorylated on Thr-2 by the serine/threonine-protein kinase PknD. Also phosphorylated to a lesser extent by PknB and PknE. Dephosphorylated by PstP.

Regulated by PknD under osmotic stress. In terms of biological role, part of a signaling pathway that enables adaptation to osmotic stress through cell wall remodeling and virulence factor production. Unphosphorylated OprA forms a complex with the anti-anti-sigma-factor paralog Rv2638 that dissociates on OprA phosphorylation by PknD. Phosphorylation of OprA may stimulate the release of SigF from an inhibitory complex and enable the transcription of osmotically regulated genes, such as oprA and the ESX-1-associated virulence factor espA. This chain is Osmosensory protein A, found in Mycobacterium tuberculosis (strain ATCC 25618 / H37Rv).